Here is a 111-residue protein sequence, read N- to C-terminus: Universal stress protein B (111 aa).

The next 2 membrane-spanning stretches (helical) occupy residues 1-21 (MIST…NMAR) and 90-110 (FILT…LMLW).

Belongs to the universal stress protein B family.

It is found in the cell inner membrane. This is Universal stress protein B from Yersinia pseudotuberculosis serotype O:1b (strain IP 31758).